A 400-amino-acid polypeptide reads, in one-letter code: Ribosomal RNA large subunit methyltransferase I (400 aa).

Residues 6-84 (FPRLVLAKGR…NEAIDSAFFE (79 aa)) form the PUA domain.

It belongs to the methyltransferase superfamily. RlmI family.

Its subcellular location is the cytoplasm. The enzyme catalyses cytidine(1962) in 23S rRNA + S-adenosyl-L-methionine = 5-methylcytidine(1962) in 23S rRNA + S-adenosyl-L-homocysteine + H(+). In terms of biological role, specifically methylates the cytosine at position 1962 (m5C1962) of 23S rRNA. In Klebsiella pneumoniae (strain 342), this protein is Ribosomal RNA large subunit methyltransferase I.